Here is a 682-residue protein sequence, read N- to C-terminus: Potassium-transporting ATPase ATP-binding subunit (682 aa).

4 helical membrane passes run 34–54, 62–82, 219–239, and 254–274; these read PVMF…IAMA, ALFS…ANFA, IALT…TATL, and VLVA…LSAI. Asp307 serves as the catalytic 4-aspartylphosphate intermediate. ATP-binding positions include Asp344, Glu348, 377–384, and Lys395; that span reads FTAQSRMS. Residues Asp518 and Asp522 each coordinate Mg(2+). 3 helical membrane passes run 588 to 608, 616 to 636, and 656 to 676; these read FAII…LNIM, AILS…PLAL, and IYGL…DLLL.

This sequence belongs to the cation transport ATPase (P-type) (TC 3.A.3) family. Type IA subfamily. As to quaternary structure, the system is composed of three essential subunits: KdpA, KdpB and KdpC.

It localises to the cell inner membrane. The catalysed reaction is K(+)(out) + ATP + H2O = K(+)(in) + ADP + phosphate + H(+). Its function is as follows. Part of the high-affinity ATP-driven potassium transport (or Kdp) system, which catalyzes the hydrolysis of ATP coupled with the electrogenic transport of potassium into the cytoplasm. This subunit is responsible for energy coupling to the transport system and for the release of the potassium ions to the cytoplasm. This is Potassium-transporting ATPase ATP-binding subunit from Escherichia coli (strain K12 / MC4100 / BW2952).